Here is a 377-residue protein sequence, read N- to C-terminus: Transmembrane 6 superfamily member 2 (377 aa).

The next 9 helical transmembrane spans lie at 10–30, 34–54, 63–83, 111–131, 140–160, 170–190, 219–239, 269–289, and 332–352; these read IAAL…VSAL, LWVA…VYSL, PLYA…IIAL, FICY…AGAI, FGLY…TGNI, PAFF…MKVF, LALV…GLVV, MLMY…ALTF, and TWGC…LLAY. 2 EXPERA domains span residues 61-186 and 217-351; these read YDPL…CWAG and ADLA…HLLA.

Belongs to the TM6SF family. Substantial expression in liver and intestine, whereas all other tissues analyzed show low levels.

It localises to the endoplasmic reticulum membrane. Its subcellular location is the endoplasmic reticulum-Golgi intermediate compartment membrane. Regulator of liver fat metabolism influencing triglyceride secretion and hepatic lipid droplet content. May function as sterol isomerase. The polypeptide is Transmembrane 6 superfamily member 2 (TM6SF2) (Homo sapiens (Human)).